Consider the following 951-residue polypeptide: Leucine-rich repeat-containing G-protein coupled receptor 4 (951 aa).

The signal sequence occupies residues 1–24 (MPGPLGLLCFLALGLLGSAGPSGA). One can recognise an LRRNT domain in the interval 25–57 (APPLCAAPCSCDGDRRVDCSGKGLTAVPEGLSA). Over 25–544 (APPLCAAPCS…LLGSWMIRLT (520 aa)) the chain is Extracellular. Cystine bridges form between cysteine 29–cysteine 35 and cysteine 33–cysteine 43. LRR repeat units follow at residues 58 to 79 (FTQA…AFKN), 82 to 103 (FLEE…ALSG), 106 to 127 (ELKV…AIRG), 130 to 151 (ALQS…SFEG), 154 to 177 (QLRH…SNLP), 178 to 199 (TLQA…AFTN), 202 to 223 (SLVV…CFDG), 226 to 247 (NLET…IKAL), 249 to 270 (SLKE…AFDG), and 273 to 294 (LLRT…AFHN). N-linked (GlcNAc...) asparagine glycosylation is present at asparagine 68. The N-linked (GlcNAc...) asparagine glycan is linked to asparagine 199. N-linked (GlcNAc...) asparagine glycans are attached at residues asparagine 294 and asparagine 314. 5 LRR repeats span residues 320–341 (HLES…LCQE), 344–365 (MLRT…NGCH), 366–387 (ALEE…TFQG), 390–411 (SLRI…AFAT), and 414–435 (PITN…GLNG). Cysteine 339 and cysteine 364 are joined by a disulfide. 2 cysteine pairs are disulfide-bonded: cysteine 470-cysteine 522 and cysteine 471-cysteine 476. N-linked (GlcNAc...) asparagine glycosylation is present at asparagine 505. The chain crosses the membrane as a helical span at residues 545-565 (VWFIFLVALFFNLLVILTTFA). The Cytoplasmic portion of the chain corresponds to 566-575 (SCTSLPSSKL). A helical membrane pass occupies residues 576 to 596 (FIGLISVSNLFMGIYTGILTF). Topologically, residues 597 to 620 (LDAVSWGRFAEFGIWWETGSGCKV) are extracellular. Cysteine 618 and cysteine 693 are joined by a disulfide. The chain crosses the membrane as a helical span at residues 621-641 (AGFLAVFSSESAIFLLMLATV). Topologically, residues 642–661 (ERSLSAKDIMKNGKSNHLKQ) are cytoplasmic. The helical transmembrane segment at 662 to 682 (FRVAALLAFLGATVAGCFPLF) threads the bilayer. Residues 683-703 (HRGEYSASPLCLPFPTGETPS) lie on the Extracellular side of the membrane. Residues 704 to 724 (LGFTVTLVLLNSLAFLLMAVI) form a helical membrane-spanning segment. Residues 725 to 756 (YTKLYCNLEKEDLSENSQSSMIKHVAWLIFTN) are Cytoplasmic-facing. Residues 757–777 (CIFFCPVAFFSFAPLITAISI) traverse the membrane as a helical segment. The Extracellular segment spans residues 778–783 (SPEIMK). The helical transmembrane segment at 784 to 804 (SVTLIFFPLPACLNPVLYVFF) threads the bilayer. The Cytoplasmic segment spans residues 805 to 951 (NPKFKEDWKL…YAYNLPRVKD (147 aa)). Position 920 is a phosphoserine (serine 920).

Belongs to the G-protein coupled receptor 1 family. Expressed in multiple steroidogenic tissues: placenta, ovary, testis and adrenal. Expressed also in spinal cord, thyroid, stomach, trachea, heart, pancreas, kidney, prostate and spleen.

It is found in the cell membrane. Receptor for R-spondins that potentiates the canonical Wnt signaling pathway and is involved in the formation of various organs. Upon binding to R-spondins (RSPO1, RSPO2, RSPO3 or RSPO4), associates with phosphorylated LRP6 and frizzled receptors that are activated by extracellular Wnt receptors, triggering the canonical Wnt signaling pathway to increase expression of target genes. In contrast to classical G-protein coupled receptors, does not activate heterotrimeric G-proteins to transduce the signal. Its function as activator of the Wnt signaling pathway is required for the development of various organs, including liver, kidney, intestine, bone, reproductive tract and eye. May also act as a receptor for norrin (NDP), such results however require additional confirmation in vivo. Required during spermatogenesis to activate the Wnt signaling pathway in peritubular myoid cells. Required for the maintenance of intestinal stem cells and Paneth cell differentiation in postnatal intestinal crypts. Acts as a regulator of bone formation and remodeling. Involved in kidney development; required for maintaining the ureteric bud in an undifferentiated state. Involved in the development of the anterior segment of the eye. Required during erythropoiesis. Also acts as a negative regulator of innate immunity by inhibiting TLR2/TLR4 associated pattern-recognition and pro-inflammatory cytokine production. Plays an important role in regulating the circadian rhythms of plasma lipids, partially through regulating the rhythmic expression of MTTP. Required for proper development of GnRH neurons (gonadotropin-releasing hormone expressing neurons) that control the release of reproductive hormones from the pituitary gland. In Homo sapiens (Human), this protein is Leucine-rich repeat-containing G-protein coupled receptor 4 (LGR4).